The following is a 282-amino-acid chain: Bifunctional protein FolD (282 aa).

Residues 165–167 (GAS) and Ile231 each bind NADP(+).

The protein belongs to the tetrahydrofolate dehydrogenase/cyclohydrolase family. In terms of assembly, homodimer.

It carries out the reaction (6R)-5,10-methylene-5,6,7,8-tetrahydrofolate + NADP(+) = (6R)-5,10-methenyltetrahydrofolate + NADPH. It catalyses the reaction (6R)-5,10-methenyltetrahydrofolate + H2O = (6R)-10-formyltetrahydrofolate + H(+). It functions in the pathway one-carbon metabolism; tetrahydrofolate interconversion. Its function is as follows. Catalyzes the oxidation of 5,10-methylenetetrahydrofolate to 5,10-methenyltetrahydrofolate and then the hydrolysis of 5,10-methenyltetrahydrofolate to 10-formyltetrahydrofolate. This Francisella tularensis subsp. tularensis (strain FSC 198) protein is Bifunctional protein FolD.